The primary structure comprises 265 residues: uncharacterized protein (265 aa).

Residues 122 to 145 (THYRDNGQTPPRDTRPHGGISLGG) form a disordered region.

This is an uncharacterized protein from Zymomonas mobilis subsp. mobilis (strain ATCC 31821 / ZM4 / CP4).